A 446-amino-acid polypeptide reads, in one-letter code: Tol-Pal system protein TolB (446 aa).

Positions 1 to 24 are cleaved as a signal peptide; sequence MKRAFLSALSVGLAALFLTGPAQA.

This sequence belongs to the TolB family. In terms of assembly, the Tol-Pal system is composed of five core proteins: the inner membrane proteins TolA, TolQ and TolR, the periplasmic protein TolB and the outer membrane protein Pal. They form a network linking the inner and outer membranes and the peptidoglycan layer.

It localises to the periplasm. In terms of biological role, part of the Tol-Pal system, which plays a role in outer membrane invagination during cell division and is important for maintaining outer membrane integrity. This chain is Tol-Pal system protein TolB, found in Dinoroseobacter shibae (strain DSM 16493 / NCIMB 14021 / DFL 12).